A 281-amino-acid polypeptide reads, in one-letter code: 3-hydroxybutyryl-CoA dehydrogenase (281 aa).

This sequence belongs to the 3-hydroxyacyl-CoA dehydrogenase family.

The enzyme catalyses (3S)-3-hydroxybutanoyl-CoA + NADP(+) = acetoacetyl-CoA + NADPH + H(+). Its pathway is lipid metabolism; butanoate metabolism. The protein is 3-hydroxybutyryl-CoA dehydrogenase (hbd) of Clostridioides difficile (Peptoclostridium difficile).